Consider the following 185-residue polypeptide: Elongation factor P (185 aa).

It belongs to the elongation factor P family.

The protein resides in the cytoplasm. It participates in protein biosynthesis; polypeptide chain elongation. In terms of biological role, involved in peptide bond synthesis. Stimulates efficient translation and peptide-bond synthesis on native or reconstituted 70S ribosomes in vitro. Probably functions indirectly by altering the affinity of the ribosome for aminoacyl-tRNA, thus increasing their reactivity as acceptors for peptidyl transferase. The sequence is that of Elongation factor P from Paraburkholderia phytofirmans (strain DSM 17436 / LMG 22146 / PsJN) (Burkholderia phytofirmans).